Reading from the N-terminus, the 395-residue chain is MQADRSMKMGHVSNPLSTSAPVDATAGPNLIPDLITKIPWPRWILFIAILAAGVLLVSCLLCVICYCCHRQRHRKQPKDKETVGLGSARNSTTTHLVQPDVECLEPCSGGDQPWGQLLLSLEYDFGSQEIRVGLRQAKNLKAEGTADPYARVSVSTQAGRRHETKVHRGTLCPMFEETCCFLVPPAELPKATLKVQLLDFKRFSEHEPLGELQLPLGTVDLQHVLESWYQLGPPGSTESEQMGELCFSLRYVPSSGRLTVVILEARGLNPGLAEAYVKVQLILNQRKWKKNKTSSKKGTTNPYFNEAFVFLVPVSQLQSMDLVLAVWARGLQLLAEPVGKVLLGPRASGQPLQHWADMLAHARRPIAQWHHLRSPREVDRALALQPRLPLLRPRS.

At 1–44 (MQADRSMKMGHVSNPLSTSAPVDATAGPNLIPDLITKIPWPRWI) the chain is on the extracellular side. The helical; Signal-anchor for type III membrane protein transmembrane segment at 45 to 65 (LFIAILAAGVLLVSCLLCVIC) threads the bilayer. Residues 66-395 (YCCHRQRHRK…PRLPLLRPRS (330 aa)) are Cytoplasmic-facing. C2 domains lie at 113–229 (PWGQ…ESWY) and 241–370 (QMGE…AQWH).

This sequence belongs to the synaptotagmin family. As to quaternary structure, homodimer or homooligomer. Homodimerization and homooligomerization do not depend on Ca(2+). Interacts with SYNCRIP isoform 2 C-terminus. Binds inositol 1,3,4,5-tetrakisphosphate (IP4). Binds to AP2 in a Ca(2+)-independent manner. Interacts with STX1A, STX1B and STX2; the interaction is Ca(2+)-dependent. As to expression, ubiquitous. Strongly expressed in heart, kidney, cerebral cortex, pancreas, and many insulin-secreting cells; lower expression in spleen. Broadly distributed in kidney.

It is found in the cell membrane. It localises to the cytoplasmic vesicle. The protein resides in the secretory vesicle. Its subcellular location is the acrosome. Functionally, involved in the trafficking and exocytosis of secretory vesicles in non-neuronal tissues. Mediates Ca(2+)-regulation of exocytosis acrosomal reaction in sperm. May mediate Ca(2+)-regulation of exocytosis in insulin secreted cells. The sequence is that of Synaptotagmin-8 (Syt8) from Rattus norvegicus (Rat).